Reading from the N-terminus, the 359-residue chain is Alanine racemase, biosynthetic (359 aa).

Residue Lys-34 is the Proton acceptor; specific for D-alanine of the active site. Lys-34 is modified (N6-(pyridoxal phosphate)lysine). Arg-129 serves as a coordination point for substrate. Tyr-255 (proton acceptor; specific for L-alanine) is an active-site residue. Residue Met-303 participates in substrate binding.

It belongs to the alanine racemase family. Pyridoxal 5'-phosphate is required as a cofactor.

The enzyme catalyses L-alanine = D-alanine. The protein operates within amino-acid biosynthesis; D-alanine biosynthesis; D-alanine from L-alanine: step 1/1. Its pathway is cell wall biogenesis; peptidoglycan biosynthesis. Its function is as follows. Catalyzes the interconversion of L-alanine and D-alanine. Provides the D-alanine required for cell wall biosynthesis. The chain is Alanine racemase, biosynthetic (alr) from Escherichia coli O6:H1 (strain CFT073 / ATCC 700928 / UPEC).